We begin with the raw amino-acid sequence, 147 residues long: Deoxyuridine 5'-triphosphate nucleotidohydrolase (147 aa).

Substrate-binding positions include 67–69 (RSG), Asn-80, and 84–86 (TID).

The protein belongs to the dUTPase family. Requires Mg(2+) as cofactor.

It carries out the reaction dUTP + H2O = dUMP + diphosphate + H(+). The protein operates within pyrimidine metabolism; dUMP biosynthesis; dUMP from dCTP (dUTP route): step 2/2. In terms of biological role, this enzyme is involved in nucleotide metabolism: it produces dUMP, the immediate precursor of thymidine nucleotides and it decreases the intracellular concentration of dUTP so that uracil cannot be incorporated into DNA. The chain is Deoxyuridine 5'-triphosphate nucleotidohydrolase from Anaeromyxobacter dehalogenans (strain 2CP-1 / ATCC BAA-258).